Reading from the N-terminus, the 145-residue chain is Putative transcriptional regulatory protein PYRAB13000 (145 aa).

This sequence belongs to the Tfx family.

Putative transcriptional regulator. The sequence is that of Putative transcriptional regulatory protein PYRAB13000 from Pyrococcus abyssi (strain GE5 / Orsay).